Reading from the N-terminus, the 311-residue chain is ATP synthase subunit gamma, mitochondrial (311 aa).

The transit peptide at 1–33 directs the protein to the mitochondrion; the sequence is MLSRIVSNNATRSVMCHQAQVGILYKTNPVRTY.

This sequence belongs to the ATPase gamma chain family. As to quaternary structure, F-type ATPases have 2 components, CF(1) - the catalytic core - and CF(0) - the membrane proton channel. CF(1) has five subunits: alpha(3), beta(3), gamma(1), delta(1), epsilon(1). CF(0) has three main subunits: a, b and c.

Its subcellular location is the mitochondrion. The protein localises to the mitochondrion inner membrane. In terms of biological role, mitochondrial membrane ATP synthase (F(1)F(0) ATP synthase or Complex V) produces ATP from ADP in the presence of a proton gradient across the membrane which is generated by electron transport complexes of the respiratory chain. F-type ATPases consist of two structural domains, F(1) - containing the extramembraneous catalytic core, and F(0) - containing the membrane proton channel, linked together by a central stalk and a peripheral stalk. During catalysis, ATP synthesis in the catalytic domain of F(1) is coupled via a rotary mechanism of the central stalk subunits to proton translocation. Part of the complex F(1) domain and the central stalk which is part of the complex rotary element. The gamma subunit protrudes into the catalytic domain formed of alpha(3)beta(3). Rotation of the central stalk against the surrounding alpha(3)beta(3) subunits leads to hydrolysis of ATP in three separate catalytic sites on the beta subunits. This is ATP synthase subunit gamma, mitochondrial (ATP3) from Saccharomyces cerevisiae (strain ATCC 204508 / S288c) (Baker's yeast).